Here is a 435-residue protein sequence, read N- to C-terminus: MANFDLTRINCQFLDRHLTFPLLEFLCGKEIYNQQELLEYILETVNKTNMIDYTMDTRKRLNLSQEMPEELVQRKAEVLATLKQLQNEVAPIMKATDILKNGESMKDSKTFVNALQKDYNFKVEHLESAYKLAKYLYECGNYQESTSYLYFCLIVMSPNDKNYLNVLWGKLAAEILTLNWNTALEDLTRLRDYIDSANFSTIQALQQRTWLIHWSVLVFFNHPKGRDLIIEMFLYKPLYLNAIQTMCPHIMRYLATAVVINRTRRNALKDLIKVIQQESYTYRDPITEFLECLYVNFDFEGARLKLHECQTVILNDFFIVACLNEFVEDARLMIFETFCRIHQCITISMLADKLNMKPNEAECWIVNLIRNARLNAKIDSKLGHVVMGTQPLSPYQQLVEKIDSLSMRSEHLAGLIERKSKQKQNQESADSWKYY.

Positions 219–392 constitute a PCI domain; the sequence is FFNHPKGRDL…GHVVMGTQPL (174 aa).

It belongs to the eIF-3 subunit E family. Component of the eukaryotic translation initiation factor 3 (eIF-3) complex. The eIF-3 complex interacts with pix. Interacts with mxt.

It localises to the cytoplasm. Component of the eukaryotic translation initiation factor 3 (eIF-3) complex, which is involved in protein synthesis of a specialized repertoire of mRNAs and, together with other initiation factors, stimulates binding of mRNA and methionyl-tRNAi to the 40S ribosome. The eIF-3 complex specifically targets and initiates translation of a subset of mRNAs involved in cell proliferation. In Drosophila erecta (Fruit fly), this protein is Eukaryotic translation initiation factor 3 subunit E (eIF3-S6).